The sequence spans 610 residues: Elongation factor 4 (610 aa).

Positions 11–193 constitute a tr-type G domain; the sequence is EKIRNFSIIA…QIVEKVPAPT (183 aa). GTP is bound by residues 23-28 and 140-143; these read DHGKST and NKID.

The protein belongs to the TRAFAC class translation factor GTPase superfamily. Classic translation factor GTPase family. LepA subfamily.

Its subcellular location is the cell membrane. The catalysed reaction is GTP + H2O = GDP + phosphate + H(+). In terms of biological role, required for accurate and efficient protein synthesis under certain stress conditions. May act as a fidelity factor of the translation reaction, by catalyzing a one-codon backward translocation of tRNAs on improperly translocated ribosomes. Back-translocation proceeds from a post-translocation (POST) complex to a pre-translocation (PRE) complex, thus giving elongation factor G a second chance to translocate the tRNAs correctly. Binds to ribosomes in a GTP-dependent manner. This is Elongation factor 4 from Streptococcus suis (strain 98HAH33).